We begin with the raw amino-acid sequence, 541 residues long: Man(5)GlcNAc(2)-PP-dolichol translocation protein RFT1 (541 aa).

11 consecutive transmembrane segments (helical) span residues 16–36 (SGLLLQVLFRLITFVLNAFIL), 45–62 (GIVNVRLTLLYSTTTFLA), 85–105 (LLWLTVPLGIFWSSCLGWVWL), 123–143 (VLFFGLSAVVELLGEPFWVLA), 154–176 (LAESMSVILRSVLTALLVLWLPH), 187–207 (LLYTTVLVLCYAIYLIQLLRS), 335–355 (LALLTGLTMTVFGFAYSQLAL), 376–396 (CLYVLLLAINGVTECFMFAAM), 414–434 (SFLVLSYLLTSWCGSVGFIMA), 470–490 (VLLGVFILSAGITSVSEAFLC), and 499–519 (LAHIAVGTICLGVTLGTAFLT).

It belongs to the RFT1 family.

It is found in the endoplasmic reticulum membrane. It functions in the pathway protein modification; protein glycosylation. Its function is as follows. Intramembrane glycolipid transporter that operates in the biosynthetic pathway of dolichol-linked oligosaccharides, the glycan precursors employed in protein asparagine (N)-glycosylation. The sequential addition of sugars to dolichol pyrophosphate produces dolichol-linked oligosaccharides containing fourteen sugars, including two GlcNAcs, nine mannoses and three glucoses. Once assembled, the oligosaccharide is transferred from the lipid to nascent proteins by oligosaccharyltransferases. The assembly of dolichol-linked oligosaccharides begins on the cytosolic side of the endoplasmic reticulum membrane and finishes in its lumen. RFT1 could mediate the translocation of the cytosolically oriented intermediate DolPP-GlcNAc2Man5, produced by ALG11, into the ER lumen where dolichol-linked oligosaccharides assembly continues. However, the intramembrane lipid transporter activity could not be confirmed in vitro. In Mus musculus (Mouse), this protein is Man(5)GlcNAc(2)-PP-dolichol translocation protein RFT1.